The following is a 554-amino-acid chain: Formate--tetrahydrofolate ligase (554 aa).

63 to 70 (TPAGEGKT) provides a ligand contact to ATP.

It belongs to the formate--tetrahydrofolate ligase family.

It catalyses the reaction (6S)-5,6,7,8-tetrahydrofolate + formate + ATP = (6R)-10-formyltetrahydrofolate + ADP + phosphate. The protein operates within one-carbon metabolism; tetrahydrofolate interconversion. In Halothermothrix orenii (strain H 168 / OCM 544 / DSM 9562), this protein is Formate--tetrahydrofolate ligase.